Here is a 635-residue protein sequence, read N- to C-terminus: 1-deoxy-D-xylulose-5-phosphate synthase (635 aa).

Residues H79 and 120–122 (GHS) contribute to the thiamine diphosphate site. D151 is a Mg(2+) binding site. Thiamine diphosphate is bound by residues 152-153 (GA), N182, Y291, and E372. N182 contacts Mg(2+).

It belongs to the transketolase family. DXPS subfamily. As to quaternary structure, homodimer. Requires Mg(2+) as cofactor. The cofactor is thiamine diphosphate.

It catalyses the reaction D-glyceraldehyde 3-phosphate + pyruvate + H(+) = 1-deoxy-D-xylulose 5-phosphate + CO2. It functions in the pathway metabolic intermediate biosynthesis; 1-deoxy-D-xylulose 5-phosphate biosynthesis; 1-deoxy-D-xylulose 5-phosphate from D-glyceraldehyde 3-phosphate and pyruvate: step 1/1. Its function is as follows. Catalyzes the acyloin condensation reaction between C atoms 2 and 3 of pyruvate and glyceraldehyde 3-phosphate to yield 1-deoxy-D-xylulose-5-phosphate (DXP). This is 1-deoxy-D-xylulose-5-phosphate synthase from Xylella fastidiosa (strain M12).